A 593-amino-acid polypeptide reads, in one-letter code: Probable 5'-nucleotidase (593 aa).

An N-terminal signal peptide occupies residues 1–21 (MKRFIPHRVIHAVCIGLALVG). Cys-22 is lipidated: N-palmitoyl cysteine. Cys-22 carries S-diacylglycerol cysteine lipidation. Residues Asp-41, His-43, Asp-91, Asn-123, and His-224 each contribute to the a divalent metal cation site. Substrate is bound by residues Phe-456 and 539–545 (YIARGKD).

This sequence belongs to the 5'-nucleotidase family. The cofactor is a divalent metal cation.

Its subcellular location is the cell membrane. The catalysed reaction is a ribonucleoside 5'-phosphate + H2O = a ribonucleoside + phosphate. The chain is Probable 5'-nucleotidase from Treponema pallidum (strain Nichols).